Here is a 116-residue protein sequence, read N- to C-terminus: NADH-ubiquinone oxidoreductase chain 3 (116 aa).

The next 3 helical transmembrane spans lie at Leu3–Phe23, Phe56–Leu76, and Pro85–Tyr105.

The protein belongs to the complex I subunit 3 family.

The protein localises to the mitochondrion membrane. The enzyme catalyses a ubiquinone + NADH + 5 H(+)(in) = a ubiquinol + NAD(+) + 4 H(+)(out). Its function is as follows. Core subunit of the mitochondrial membrane respiratory chain NADH dehydrogenase (Complex I) that is believed to belong to the minimal assembly required for catalysis. Complex I functions in the transfer of electrons from NADH to the respiratory chain. The immediate electron acceptor for the enzyme is believed to be ubiquinone. The protein is NADH-ubiquinone oxidoreductase chain 3 (MT-ND3) of Oncorhynchus masou (Cherry salmon).